The primary structure comprises 526 residues: UDP-N-acetylmuramoyl-L-alanyl-D-glutamate--2,6-diaminopimelate ligase (526 aa).

Leucine 48 and serine 50 together coordinate UDP-N-acetyl-alpha-D-muramoyl-L-alanyl-D-glutamate. ATP is bound at residue 136–142 (GTSGKTT). Residues 178–179 (TT), serine 205, and arginine 213 contribute to the UDP-N-acetyl-alpha-D-muramoyl-L-alanyl-D-glutamate site. Position 245 is an N6-carboxylysine (lysine 245). Meso-2,6-diaminopimelate is bound by residues arginine 408, 432-435 (DNPR), glycine 490, and glutamate 494. Positions 432–435 (DNPR) match the Meso-diaminopimelate recognition motif motif.

The protein belongs to the MurCDEF family. MurE subfamily. The cofactor is Mg(2+). Post-translationally, carboxylation is probably crucial for Mg(2+) binding and, consequently, for the gamma-phosphate positioning of ATP.

The protein localises to the cytoplasm. The catalysed reaction is UDP-N-acetyl-alpha-D-muramoyl-L-alanyl-D-glutamate + meso-2,6-diaminopimelate + ATP = UDP-N-acetyl-alpha-D-muramoyl-L-alanyl-gamma-D-glutamyl-meso-2,6-diaminopimelate + ADP + phosphate + H(+). It participates in cell wall biogenesis; peptidoglycan biosynthesis. Its function is as follows. Catalyzes the addition of meso-diaminopimelic acid to the nucleotide precursor UDP-N-acetylmuramoyl-L-alanyl-D-glutamate (UMAG) in the biosynthesis of bacterial cell-wall peptidoglycan. The polypeptide is UDP-N-acetylmuramoyl-L-alanyl-D-glutamate--2,6-diaminopimelate ligase (Corynebacterium efficiens (strain DSM 44549 / YS-314 / AJ 12310 / JCM 11189 / NBRC 100395)).